Here is an 87-residue protein sequence, read N- to C-terminus: UPF0250 protein ETA_23570 (87 aa).

This sequence belongs to the UPF0250 family.

The chain is UPF0250 protein ETA_23570 from Erwinia tasmaniensis (strain DSM 17950 / CFBP 7177 / CIP 109463 / NCPPB 4357 / Et1/99).